The sequence spans 938 residues: Isoleucine--tRNA ligase (938 aa).

Residues 58–68 (PYANGSIHIGH) carry the 'HIGH' region motif. At K183 the chain carries N6-acetyllysine. An L-isoleucyl-5'-AMP-binding site is contributed by E561. The 'KMSKS' region motif lies at 602 to 606 (KMSKS). Position 605 (K605) interacts with ATP. Zn(2+) is bound by residues C901, C904, C921, and C924.

It belongs to the class-I aminoacyl-tRNA synthetase family. IleS type 1 subfamily. As to quaternary structure, monomer. Requires Zn(2+) as cofactor.

It is found in the cytoplasm. It catalyses the reaction tRNA(Ile) + L-isoleucine + ATP = L-isoleucyl-tRNA(Ile) + AMP + diphosphate. Functionally, catalyzes the attachment of isoleucine to tRNA(Ile). As IleRS can inadvertently accommodate and process structurally similar amino acids such as valine, to avoid such errors it has two additional distinct tRNA(Ile)-dependent editing activities. One activity is designated as 'pretransfer' editing and involves the hydrolysis of activated Val-AMP. The other activity is designated 'posttransfer' editing and involves deacylation of mischarged Val-tRNA(Ile). The protein is Isoleucine--tRNA ligase of Shigella dysenteriae serotype 1 (strain Sd197).